Here is a 132-residue protein sequence, read N- to C-terminus: Small ribosomal subunit protein uS11 (132 aa).

It belongs to the universal ribosomal protein uS11 family. In terms of assembly, part of the 30S ribosomal subunit. Interacts with proteins S7 and S18. Binds to IF-3.

Functionally, located on the platform of the 30S subunit, it bridges several disparate RNA helices of the 16S rRNA. Forms part of the Shine-Dalgarno cleft in the 70S ribosome. This chain is Small ribosomal subunit protein uS11, found in Chlamydia trachomatis serovar L2 (strain ATCC VR-902B / DSM 19102 / 434/Bu).